Consider the following 243-residue polypeptide: Precursor of CEP9 (243 aa).

An N-terminal signal peptide occupies residues 1 to 26 (MKLLSITLTSIVISMVFYQTPITTEA). The propeptide occupies 28 to 44 (SLRKTNDQDHFKAGFTD). Disordered stretches follow at residues 42-63 (FTDD…KKGN), 91-173 (KTGS…VKGF), and 189-243 (NGQD…EPKA). Pro48 bears the Hydroxyproline; partial mark. Residue Pro51 is modified to Hydroxyproline. At Pro55 the chain carries Hydroxyproline; partial. Residues 60–96 (KKGNVNVEGFQDDFKPTEGRKLLKTNVQDHFKTGSTD) constitute a propeptide that is removed on maturation. Pro100, Pro103, and Pro107 each carry hydroxyproline. A propeptide spanning residues 112-148 (KKGNVNVESSEDDFKHKEGRKLQQTNGQNHFKTGSTD) is cleaved from the precursor. Residues 133 to 147 (LQQTNGQNHFKTGST) are compositionally biased toward polar residues. Hydroxyproline is present on residues Pro152, Pro155, and Pro159. The propeptide occupies 164–200 (KKGHANVKGFKDDFAPTEEIRLQKMNGQDHFKTGSTD). Hydroxyproline occurs at positions 204, 207, and 211. The propeptide occupies 216 to 219 (KKGD). 3 positions are modified to hydroxyproline: Pro223, Pro226, and Pro230. A propeptide spanning residues 235–243 (AVKNDEPKA) is cleaved from the precursor.

It belongs to the C-terminally encoded plant signaling peptide (CEP) family. Interacts with CEP receptors (e.g. CEPR1 and CEPR2). Post-translationally, hydroxylated peptide is more active than non-hydroxylated peptide. The mature small signaling peptide is generated by proteolytic processing of the longer precursor. As to expression, expressed in lateral root primordia and in lateral roots excluding the meristem region. Also present in the aerial tissues, such as leaf petioles and the shoot apex region.

The protein resides in the secreted. The protein localises to the extracellular space. It is found in the apoplast. In terms of biological role, extracellular signaling peptide that represses primary root growth rate and significantly inhibits lateral root formation. Modulates leaf morphology. Regulates systemic nitrogen (N)-demand signaling. Mediates up-regulation of genes involved in N uptake and assimilation pathways. This is Precursor of CEP9 from Arabidopsis thaliana (Mouse-ear cress).